The following is a 78-amino-acid chain: Hainantoxin-XX.2 (78 aa).

Residues 1–23 (MKSATLLALSYLLIALYFLICEA) form the signal peptide. Positions 24–47 (EHSRYEEHEILEENMGDVVNLEQR) are excised as a propeptide. 3 disulfides stabilise this stretch: C49/C62, C56/C66, and C61/C77.

It belongs to the hainantoxin family. 20 subfamily. In terms of tissue distribution, expressed by the venom gland.

It localises to the secreted. Its function is as follows. Moderately inhibits Kv1.1/KCNA1 and Kv1.2/KCNA2 and weakly inhibits Kv1.3/KCNA3, and Kv2.1/KCNB1 voltage-gated potassium channels. This chain is Hainantoxin-XX.2, found in Cyriopagopus hainanus (Chinese bird spider).